We begin with the raw amino-acid sequence, 346 residues long: ATP-dependent 6-phosphofructokinase (346 aa).

Residues G13, 76-77 (RL), and 106-109 (GEGT) each bind ATP. E107 is a binding site for Mg(2+). Substrate-binding positions include 129–131 (TID), R166, 173–175 (MGR), E226, R270, and 276–279 (HIQR). Catalysis depends on D131, which acts as the Proton acceptor.

It belongs to the phosphofructokinase type A (PFKA) family. Mixed-substrate PFK group III subfamily. Homodimer or homotetramer. Mg(2+) serves as cofactor.

It is found in the cytoplasm. The catalysed reaction is beta-D-fructose 6-phosphate + ATP = beta-D-fructose 1,6-bisphosphate + ADP + H(+). It participates in carbohydrate degradation; glycolysis; D-glyceraldehyde 3-phosphate and glycerone phosphate from D-glucose: step 3/4. Its function is as follows. Catalyzes the phosphorylation of D-fructose 6-phosphate to fructose 1,6-bisphosphate by ATP, the first committing step of glycolysis. This chain is ATP-dependent 6-phosphofructokinase, found in Corynebacterium efficiens (strain DSM 44549 / YS-314 / AJ 12310 / JCM 11189 / NBRC 100395).